Consider the following 206-residue polypeptide: Ion-translocating oxidoreductase complex subunit G (206 aa).

The chain crosses the membrane as a helical span at residues 9–29 (GITLALFAAGSTGLTAAINQM). At T174 the chain carries FMN phosphoryl threonine.

It belongs to the RnfG family. The complex is composed of six subunits: RsxA, RsxB, RsxC, RsxD, RsxE and RsxG. Requires FMN as cofactor.

The protein resides in the cell inner membrane. Functionally, part of a membrane-bound complex that couples electron transfer with translocation of ions across the membrane. Required to maintain the reduced state of SoxR. Probably transfers electron from NAD(P)H to SoxR. The chain is Ion-translocating oxidoreductase complex subunit G from Escherichia coli (strain K12).